A 255-amino-acid chain; its full sequence is Small ribosomal subunit protein uS2 (255 aa).

The disordered stretch occupies residues 232 to 255; that stretch reads ASGRDIGASEEAPIEPALEDEAGA.

Belongs to the universal ribosomal protein uS2 family.

This Agrobacterium fabrum (strain C58 / ATCC 33970) (Agrobacterium tumefaciens (strain C58)) protein is Small ribosomal subunit protein uS2.